A 314-amino-acid chain; its full sequence is tRNA pseudouridine synthase B (314 aa).

Asp54 functions as the Nucleophile in the catalytic mechanism.

The protein belongs to the pseudouridine synthase TruB family. Type 1 subfamily.

The catalysed reaction is uridine(55) in tRNA = pseudouridine(55) in tRNA. In terms of biological role, responsible for synthesis of pseudouridine from uracil-55 in the psi GC loop of transfer RNAs. The chain is tRNA pseudouridine synthase B from Cupriavidus metallidurans (strain ATCC 43123 / DSM 2839 / NBRC 102507 / CH34) (Ralstonia metallidurans).